A 560-amino-acid chain; its full sequence is 2-succinylbenzoate--CoA ligase, chloroplastic/peroxisomal (560 aa).

A chloroplast-targeting transit peptide spans 1 to 15; that stretch reads MANHSRPHICQCLTR. Helical transmembrane passes span 69–89, 189–209, and 225–245; these read LFLE…PLNY, GVTI…AIAG, and IGGL…VLLP. The Microbody targeting signal signature appears at 558 to 560; it reads SSL.

It belongs to the ATP-dependent AMP-binding enzyme family. MenE subfamily. In terms of tissue distribution, high expression in young leaves and flowers. Not expressed in roots.

It is found in the plastid. It localises to the chloroplast membrane. The protein resides in the peroxisome membrane. The enzyme catalyses 2-succinylbenzoate + ATP + CoA = 2-succinylbenzoyl-CoA + AMP + diphosphate. Its function is as follows. Involved in the biosynthesis of phylloquinone (vitamin K1). Converts 2-succinylbenzoate (OSB) to 2-succinylbenzoyl-CoA (OSB-CoA). The protein is 2-succinylbenzoate--CoA ligase, chloroplastic/peroxisomal (AAE14) of Arabidopsis thaliana (Mouse-ear cress).